Consider the following 425-residue polypeptide: uncharacterized protein (425 aa).

Residues 55 to 181 (RYAHSLGVYE…DLDTDRMDYL (127 aa)) enclose the HD domain.

This is an uncharacterized protein from Mycoplasma genitalium (strain ATCC 33530 / DSM 19775 / NCTC 10195 / G37) (Mycoplasmoides genitalium).